The chain runs to 345 residues: GTPase Obg (345 aa).

Positions 1 to 159 (MKFLDQAKVY…KWIWLRLKLI (159 aa)) constitute an Obg domain. The OBG-type G domain occupies 160–327 (ADAGLVGLPN…ALRALLAVID (168 aa)). GTP contacts are provided by residues 166 to 173 (GLPNAGKS), 191 to 195 (FTTLH), 212 to 215 (DIPG), 279 to 282 (SKID), and 308 to 310 (SSQ). S173 and T193 together coordinate Mg(2+).

This sequence belongs to the TRAFAC class OBG-HflX-like GTPase superfamily. OBG GTPase family. As to quaternary structure, monomer. The cofactor is Mg(2+).

It localises to the cytoplasm. In terms of biological role, an essential GTPase which binds GTP, GDP and possibly (p)ppGpp with moderate affinity, with high nucleotide exchange rates and a fairly low GTP hydrolysis rate. Plays a role in control of the cell cycle, stress response, ribosome biogenesis and in those bacteria that undergo differentiation, in morphogenesis control. This is GTPase Obg from Azorhizobium caulinodans (strain ATCC 43989 / DSM 5975 / JCM 20966 / LMG 6465 / NBRC 14845 / NCIMB 13405 / ORS 571).